The primary structure comprises 451 residues: MPREIITLQLGQCGNQIGFEFWKQLCAEHGISPEGIVEEFATEGTDRKDVFFYQADDEHYIPRAVLLDLEPRVIHSILNSPYANLYNPENIYLSEHGGGAGNNWASGFSQGEKIHEDIFDIIDREADGSDSLEGFVLCHSIAGGTGSGLGSYLLERLNDRYPKKLVQTYSVFPNQDEMSHVVVQPYNSLLTLKRLTQNADCVVVLDNTALNRIATDRLHIQNPSFSQINQLVSTIMSASTTTLRYPGYMNNDLIGLIASLIPTPRLHFLMTGYTPLTTDQSVASVRKTTVLDVMRRLLQPKNVMVSTGRDRQTNHCYIAILNIIQGEVDPTQVHKSLQRIRERKLANFIPWGPASIQVALSRKSPYLPSAHRVSGLMMANHTNISSLFERTCRQYDKLRKREAFLEQFRKEDIFKDNFDELDNSREIVQQLIDEYHAATRPDYISWGTQDK.

Residue 142-148 participates in GTP binding; sequence AGGTGSG.

Belongs to the tubulin family.

It localises to the cytoplasm. Its subcellular location is the cytoskeleton. The protein localises to the microtubule organizing center. It is found in the centrosome. The protein resides in the spindle. Its function is as follows. Tubulin is the major constituent of microtubules. The gamma chain is found at microtubule organizing centers (MTOC) such as the spindle poles or the centrosome, suggesting that it is involved in the minus-end nucleation of microtubule assembly. This chain is Tubulin gamma-1 chain (tubg1), found in Xenopus laevis (African clawed frog).